Reading from the N-terminus, the 471-residue chain is Cysteine--tRNA ligase (471 aa).

A Zn(2+)-binding site is contributed by cysteine 29. The short motif at 31–41 (PTVYNYIHIGN) is the 'HIGH' region element. Positions 209, 234, and 238 each coordinate Zn(2+). Positions 266 to 270 (KMSKS) match the 'KMSKS' region motif. Lysine 269 provides a ligand contact to ATP.

The protein belongs to the class-I aminoacyl-tRNA synthetase family. Monomer. Zn(2+) serves as cofactor.

It localises to the cytoplasm. The catalysed reaction is tRNA(Cys) + L-cysteine + ATP = L-cysteinyl-tRNA(Cys) + AMP + diphosphate. The polypeptide is Cysteine--tRNA ligase (Listeria monocytogenes serovar 1/2a (strain ATCC BAA-679 / EGD-e)).